The following is a 302-amino-acid chain: Acetaldehyde dehydrogenase (302 aa).

Cys-131 serves as the catalytic Acyl-thioester intermediate. NAD(+)-binding positions include 162–170 (SAGPGTRKN) and Asn-273.

This sequence belongs to the acetaldehyde dehydrogenase family.

The catalysed reaction is acetaldehyde + NAD(+) + CoA = acetyl-CoA + NADH + H(+). This chain is Acetaldehyde dehydrogenase, found in Acidovorax sp. (strain JS42).